Reading from the N-terminus, the 428-residue chain is Cholecystokinin receptor type A (428 aa).

Residues Met-1–Pro-41 lie on the Extracellular side of the membrane. N-linked (GlcNAc...) asparagine glycans are attached at residues Asn-10 and Asn-24. A disulfide bond links Cys-18 and Cys-29. The chain crosses the membrane as a helical span at residues Ala-42–Ile-67. Residues Arg-68 to Asn-77 are Cytoplasmic-facing. The helical transmembrane segment at Ile-78–Leu-104 threads the bilayer. The Extracellular segment spans residues Lys-105–Lys-115. A disulfide bridge connects residues Cys-114 and Cys-196. A helical membrane pass occupies residues Thr-116–Leu-137. Over Glu-138–His-157 the chain is Cytoplasmic. A helical membrane pass occupies residues Ala-158–Ile-178. Topologically, residues Tyr-179 to His-210 are extracellular. A glycan (N-linked (GlcNAc...) asparagine) is linked at Asn-190. A helical membrane pass occupies residues Thr-211–Leu-234. At Glu-235–Arg-313 the chain is on the cytoplasmic side. The segment at Lys-248–Gln-272 is disordered. A helical transmembrane segment spans residues Met-314 to Ala-334. At Trp-335–Gly-349 the chain is on the extracellular side. Residues Thr-350–Met-373 traverse the membrane as a helical segment. At Asn-374 to Gln-428 the chain is on the cytoplasmic side. The S-palmitoyl cysteine moiety is linked to residue Cys-387. The disordered stretch occupies residues Pro-394 to Gln-428. Positions Ala-411–Ser-422 are enriched in polar residues.

This sequence belongs to the G-protein coupled receptor 1 family.

It localises to the cell membrane. In terms of biological role, receptor for cholecystokinin. Mediates pancreatic growth and enzyme secretion, smooth muscle contraction of the gall bladder and stomach. Has a 1000-fold higher affinity for CCK rather than for gastrin. It modulates feeding and dopamine-induced behavior in the central and peripheral nervous system. This receptor mediates its action by association with G proteins that activate a phosphatidylinositol-calcium second messenger system. This chain is Cholecystokinin receptor type A (CCKAR), found in Homo sapiens (Human).